The sequence spans 83 residues: Cytochrome b559 subunit alpha (83 aa).

Residues 21 to 35 traverse the membrane as a helical segment; sequence VIHSITIPSLFIAGW. Histidine 23 serves as a coordination point for heme.

This sequence belongs to the PsbE/PsbF family. In terms of assembly, heterodimer of an alpha subunit and a beta subunit. PSII is composed of 1 copy each of membrane proteins PsbA, PsbB, PsbC, PsbD, PsbE, PsbF, PsbH, PsbI, PsbJ, PsbK, PsbL, PsbM, PsbT, PsbX, PsbY, PsbZ, Psb30/Ycf12, at least 3 peripheral proteins of the oxygen-evolving complex and a large number of cofactors. It forms dimeric complexes. Heme b serves as cofactor.

The protein localises to the plastid. The protein resides in the chloroplast thylakoid membrane. This b-type cytochrome is tightly associated with the reaction center of photosystem II (PSII). PSII is a light-driven water:plastoquinone oxidoreductase that uses light energy to abstract electrons from H(2)O, generating O(2) and a proton gradient subsequently used for ATP formation. It consists of a core antenna complex that captures photons, and an electron transfer chain that converts photonic excitation into a charge separation. The sequence is that of Cytochrome b559 subunit alpha from Staurastrum punctulatum (Green alga).